The following is a 421-amino-acid chain: Cell division protein FtsZ (421 aa).

GTP-binding positions include 26–30 (GGGGN), 132–134 (GTG), Glu-163, Arg-167, and Asn-211.

The protein belongs to the FtsZ family. Homodimer. Polymerizes to form a dynamic ring structure in a strictly GTP-dependent manner. Interacts directly with several other division proteins.

The protein resides in the cytoplasm. Its function is as follows. Essential cell division protein that forms a contractile ring structure (Z ring) at the future cell division site. The regulation of the ring assembly controls the timing and the location of cell division. One of the functions of the FtsZ ring is to recruit other cell division proteins to the septum to produce a new cell wall between the dividing cells. Binds GTP and shows GTPase activity. This Haemophilus influenzae (strain ATCC 51907 / DSM 11121 / KW20 / Rd) protein is Cell division protein FtsZ.